Reading from the N-terminus, the 145-residue chain is Large ribosomal subunit protein uL15 (145 aa).

Positions 1-50 (MLHTIKPVANARKTTKRLGRGPGSGTGKTSGKGHKGQLARSGKTLRPGFE) are disordered. Gly residues predominate over residues 20–30 (RGPGSGTGKTS).

The protein belongs to the universal ribosomal protein uL15 family. As to quaternary structure, part of the 50S ribosomal subunit.

Its function is as follows. Binds to the 23S rRNA. The protein is Large ribosomal subunit protein uL15 of Phytoplasma australiense.